The sequence spans 467 residues: Ribulose bisphosphate carboxylase large chain (467 aa).

The propeptide occupies 1 to 2 (MS). Position 3 is an N-acetylproline (P3). K14 bears the N6,N6,N6-trimethyllysine mark. Residues N123 and T173 each contribute to the substrate site. Catalysis depends on K175, which acts as the Proton acceptor. Position 177 (K177) interacts with substrate. Positions 201, 203, and 204 each coordinate Mg(2+). At K201 the chain carries N6-carboxylysine. H294 serves as the catalytic Proton acceptor. Substrate is bound by residues R295, H327, and S379.

It belongs to the RuBisCO large chain family. Type I subfamily. In terms of assembly, heterohexadecamer of 8 large chains and 8 small chains; disulfide-linked. The disulfide link is formed within the large subunit homodimers. Requires Mg(2+) as cofactor. Post-translationally, the disulfide bond which can form in the large chain dimeric partners within the hexadecamer appears to be associated with oxidative stress and protein turnover.

It localises to the plastid. The protein resides in the chloroplast. It catalyses the reaction 2 (2R)-3-phosphoglycerate + 2 H(+) = D-ribulose 1,5-bisphosphate + CO2 + H2O. The enzyme catalyses D-ribulose 1,5-bisphosphate + O2 = 2-phosphoglycolate + (2R)-3-phosphoglycerate + 2 H(+). Its function is as follows. RuBisCO catalyzes two reactions: the carboxylation of D-ribulose 1,5-bisphosphate, the primary event in carbon dioxide fixation, as well as the oxidative fragmentation of the pentose substrate in the photorespiration process. Both reactions occur simultaneously and in competition at the same active site. In Phoenix reclinata (Senegal date palm), this protein is Ribulose bisphosphate carboxylase large chain.